A 329-amino-acid polypeptide reads, in one-letter code: N-acetylmuramoyl-L-alanine amidase sle1 (329 aa).

A signal peptide spans 1-26; it reads MNKKILATAVLGTGALSTLFAHQAEA. LysM domains are found at residues 28–71, 88–131, and 152–195; these read TTHT…VLKV, STYT…QLKV, and STYT…KLRV. One can recognise a Peptidase C51 domain in the interval 205 to 329; sequence STRSAQSTYY…YQVRNYKFIH (125 aa).

The protein localises to the secreted. It localises to the cell surface. It carries out the reaction Hydrolyzes the link between N-acetylmuramoyl residues and L-amino acid residues in certain cell-wall glycopeptides.. Peptidoglycan hydrolase involved in the splitting of the septum during cell division. In Staphylococcus haemolyticus (strain JCSC1435), this protein is N-acetylmuramoyl-L-alanine amidase sle1 (sle1).